Reading from the N-terminus, the 464-residue chain is Nuclear distribution protein nudF 2 (464 aa).

The 33-residue stretch at 9 to 41 (QAAELNKSIIAYLSAHGLAETLAAFRKESDFPD) folds into the LisH domain. Residues 63 to 88 (NSTLMKKLLALESHNKALRNELNSTR) adopt a coiled-coil conformation. 8 WD repeats span residues 112-151 (SHRDSINCIAFHPKYSLIASGSGDLTIRIWDWEDSTLERT), 154-195 (GHTM…KNVK), 199-238 (GHDHIVSAVRFIPSGNLLASASRDMKVILWNVINGYRVKT), 241-280 (DHTGWVRDISPSFDGQFLLSTGDDMTVRLWEISASQPICK), 285-343 (GHEN…MTLT), 344-383 (GHASWVRAIAFHPGGKYLLSVSDDKTMRCWDLSQQGRCVK), 388-424 (AHDGFITCLKWVPGIAKDTRNGTMTISYQRKGSAELP), and 426-464 (SKLDEVGQPGVQIRCVLATGGEDQKIRVFALQANDRSHK).

Belongs to the WD repeat LIS1/nudF family. As to quaternary structure, self-associates. Interacts with nudE and dynein.

Its subcellular location is the cytoplasm. The protein resides in the cytoskeleton. It localises to the spindle pole. Functionally, positively regulates the activity of the minus-end directed microtubule motor protein dynein. May enhance dynein-mediated microtubule sliding by targeting dynein to the microtubule plus end. Required for nuclear migration during vegetative growth as well as development. Required for retrograde early endosome (EE) transport from the hyphal tip. Required for localization of dynein to the mitotic spindle poles. Recruits additional proteins to the dynein complex at SPBs. The chain is Nuclear distribution protein nudF 2 from Penicillium rubens (strain ATCC 28089 / DSM 1075 / NRRL 1951 / Wisconsin 54-1255) (Penicillium chrysogenum).